Consider the following 292-residue polypeptide: 4-hydroxy-tetrahydrodipicolinate synthase (292 aa).

Thr-46 contributes to the pyruvate binding site. Residue Tyr-134 is the Proton donor/acceptor of the active site. The Schiff-base intermediate with substrate role is filled by Lys-162. Ile-204 serves as a coordination point for pyruvate.

Belongs to the DapA family. In terms of assembly, homotetramer; dimer of dimers.

It is found in the cytoplasm. It carries out the reaction L-aspartate 4-semialdehyde + pyruvate = (2S,4S)-4-hydroxy-2,3,4,5-tetrahydrodipicolinate + H2O + H(+). Its pathway is amino-acid biosynthesis; L-lysine biosynthesis via DAP pathway; (S)-tetrahydrodipicolinate from L-aspartate: step 3/4. Catalyzes the condensation of (S)-aspartate-beta-semialdehyde [(S)-ASA] and pyruvate to 4-hydroxy-tetrahydrodipicolinate (HTPA). In Moorella thermoacetica (strain ATCC 39073 / JCM 9320), this protein is 4-hydroxy-tetrahydrodipicolinate synthase.